A 293-amino-acid polypeptide reads, in one-letter code: HTH-type transcriptional regulator HdfR (293 aa).

Residues 1–58 (MDTELLKTFLEVSRTRHFGRAAESLYLTQSAVSFRIRQLENQLGANLFTRHRNNIRLT) enclose the HTH lysR-type domain. Residues 18–37 (FGRAAESLYLTQSAVSFRIR) constitute a DNA-binding region (H-T-H motif).

This sequence belongs to the LysR transcriptional regulatory family.

In terms of biological role, negatively regulates the transcription of the flagellar master operon flhDC by binding to the upstream region of the operon. This chain is HTH-type transcriptional regulator HdfR, found in Yersinia pseudotuberculosis serotype O:1b (strain IP 31758).